Here is a 189-residue protein sequence, read N- to C-terminus: Apolipoprotein D (189 aa).

An N-terminal signal peptide occupies residues 1 to 21 (MAPTLLLLLPALAGLISVAQG). At Gln22 the chain carries Pyrrolidone carboxylic acid. Intrachain disulfides connect Cys29/Cys135 and Cys62/Cys186. N-linked (GlcNAc...) asparagine glycans are attached at residues Asn66 and Asn99.

The protein belongs to the calycin superfamily. Lipocalin family. Homodimer. In terms of tissue distribution, most heavily expressed in adrenal gland, lung, brain, testis and spleen.

Its subcellular location is the secreted. Its function is as follows. APOD occurs in the macromolecular complex with lecithin-transport and binding of bilin. Appears to be able to transport a variety of ligands in a number of different contexts. The chain is Apolipoprotein D (APOD) from Oryctolagus cuniculus (Rabbit).